The following is a 132-amino-acid chain: UPF0212 protein PYRAB08340 (132 aa).

It belongs to the UPF0212 family.

The polypeptide is UPF0212 protein PYRAB08340 (Pyrococcus abyssi (strain GE5 / Orsay)).